The primary structure comprises 395 residues: E3 ubiquitin-protein ligase RDUF1 (395 aa).

Disordered regions lie at residues 1-22 and 107-130; these read MMPN…TTTT and PVIV…EGDG. The segment covering 9–22 has biased composition (low complexity); the sequence is TITPTTESTTTTTT. Positions 121–130 are enriched in basic and acidic residues; that stretch reads ERVENEEGDG. An RING-type; atypical zinc finger spans residues 215 to 256; it reads CAVCTEVFEAGIEGREMPCKHIFHGDCIVPWLSIRNSCPVCR.

As to expression, expressed in root tips, leaf tips, junction of carpels and pedicels, stigma, anthers, pollen, vasculature of sepals and petals, immature seeds and embryos.

It is found in the cytoplasm. Its subcellular location is the cytosol. The protein resides in the nucleus. It carries out the reaction S-ubiquitinyl-[E2 ubiquitin-conjugating enzyme]-L-cysteine + [acceptor protein]-L-lysine = [E2 ubiquitin-conjugating enzyme]-L-cysteine + N(6)-ubiquitinyl-[acceptor protein]-L-lysine.. It functions in the pathway protein modification; protein ubiquitination. Its function is as follows. E3 ubiquitin-protein ligase involved in the positive regulation of abscisic acid-dependent drought stress responses. Involved in the positive regulation of responses to salt and osmotic stresses during seed germination and early seedling development. Possesses E3 ubiquitin ligase activity in vitro. This is E3 ubiquitin-protein ligase RDUF1 from Arabidopsis thaliana (Mouse-ear cress).